A 280-amino-acid polypeptide reads, in one-letter code: Eukaryotic translation initiation factor 3 subunit F-1 (280 aa).

The MPN domain maps to 8–138 (VRVHPVVLFQ…LRAYICIQLG (131 aa)).

It belongs to the eIF-3 subunit F family. In terms of assembly, component of the eukaryotic translation initiation factor 3 (eIF-3) complex. The eIF-3 complex interacts with pix.

The protein localises to the cytoplasm. Functionally, component of the eukaryotic translation initiation factor 3 (eIF-3) complex, which is involved in protein synthesis of a specialized repertoire of mRNAs and, together with other initiation factors, stimulates binding of mRNA and methionyl-tRNAi to the 40S ribosome. The eIF-3 complex specifically targets and initiates translation of a subset of mRNAs involved in cell proliferation. The sequence is that of Eukaryotic translation initiation factor 3 subunit F-1 from Drosophila mojavensis (Fruit fly).